A 246-amino-acid chain; its full sequence is Electron transfer flavoprotein beta subunit lysine methyltransferase (246 aa).

Belongs to the methyltransferase superfamily. ETFBKMT family.

It is found in the cytoplasm. The protein resides in the mitochondrion matrix. It carries out the reaction L-lysyl-[protein] + 3 S-adenosyl-L-methionine = N(6),N(6),N(6)-trimethyl-L-lysyl-[protein] + 3 S-adenosyl-L-homocysteine + 3 H(+). In terms of biological role, protein-lysine methyltransferase that selectively trimethylates the flavoprotein ETFB in mitochondria. Thereby, may negatively regulate the function of ETFB in electron transfer from Acyl-CoA dehydrogenases to the main respiratory chain. The chain is Electron transfer flavoprotein beta subunit lysine methyltransferase (etfbkmt) from Xenopus laevis (African clawed frog).